Reading from the N-terminus, the 27-residue chain is Caerulein precursor fragment R4 (27 aa).

In terms of tissue distribution, expressed by the skin glands.

The protein localises to the secreted. Functionally, antimicrobial peptide. In Xenopus ruwenzoriensis (Uganda clawed frog), this protein is Caerulein precursor fragment R4.